The chain runs to 682 residues: Putative protein RhsE (682 aa).

Residues 348 to 360 (ENGEREKAQRRSL) are compositionally biased toward basic and acidic residues. Residues 348-372 (ENGEREKAQRRSLAETLQQEGSENG) form a disordered region.

It belongs to the RHS family.

Rhs elements have a nonessential function. They may play an important role in the natural ecology of the cell. In Escherichia coli (strain K12), this protein is Putative protein RhsE (rhsE).